The following is a 453-amino-acid chain: Ribosomal protein uS12 methylthiotransferase RimO (453 aa).

Positions 5–120 (PKVGFVSLGC…VMQAVHSHLP (116 aa)) constitute an MTTase N-terminal domain. Residues Cys14, Cys50, Cys79, Cys151, Cys155, and Cys158 each contribute to the [4Fe-4S] cluster site. The 246-residue stretch at 137–382 (LTPRHYAYLK…MEVAEEVSAN (246 aa)) folds into the Radical SAM core domain. One can recognise a TRAM domain in the interval 385-453 (QRKVGKTLKV…ADGHDLWGEV (69 aa)).

The protein belongs to the methylthiotransferase family. RimO subfamily. The cofactor is [4Fe-4S] cluster.

It is found in the cytoplasm. The catalysed reaction is L-aspartate(89)-[ribosomal protein uS12]-hydrogen + (sulfur carrier)-SH + AH2 + 2 S-adenosyl-L-methionine = 3-methylsulfanyl-L-aspartate(89)-[ribosomal protein uS12]-hydrogen + (sulfur carrier)-H + 5'-deoxyadenosine + L-methionine + A + S-adenosyl-L-homocysteine + 2 H(+). In terms of biological role, catalyzes the methylthiolation of an aspartic acid residue of ribosomal protein uS12. The chain is Ribosomal protein uS12 methylthiotransferase RimO from Burkholderia cenocepacia (strain HI2424).